A 210-amino-acid polypeptide reads, in one-letter code: V-type ATP synthase subunit D (210 aa).

This sequence belongs to the V-ATPase D subunit family.

Functionally, produces ATP from ADP in the presence of a proton gradient across the membrane. In Coprothermobacter proteolyticus (strain ATCC 35245 / DSM 5265 / OCM 4 / BT), this protein is V-type ATP synthase subunit D.